Reading from the N-terminus, the 447-residue chain is Nacrein (447 aa).

A signal peptide spans 1–17 (MYLHLTALCVVIPLCYG). The N-linked (GlcNAc...) asparagine glycan is linked to N44. An Alpha-carbonic anhydrase domain is found at 50-446 (AGFSYDRSIC…KNKVTVYKSF (397 aa)). Zn(2+)-binding residues include H149, H151, and H174. The disordered stretch occupies residues 218-329 (DEPDDEECKH…GENGHKHGCR (112 aa)). Residues 224 to 236 (ECKHILKGHHPDN) are compositionally biased toward basic and acidic residues. Positions 237 to 321 (NENGNGDNGN…NNGENGNNGE (85 aa)) are enriched in low complexity. 27 repeat units span residues 242-244 (GDN), 245-247 (GNN), 248-250 (GYN), 251-253 (GDN), 254-256 (GNN), 257-259 (GDN), 260-262 (GNN), 263-265 (SYN), 266-268 (GDN), 269-271 (GNN), 272-274 (GVN), 275-277 (GNN), 278-280 (GYN), 281-283 (GDN), 284-286 (GNN), 287-289 (GDN), 290-292 (GNN), 293-295 (GYN), 296-298 (GDN), 299-301 (GNN), 302-304 (GDN), 305-307 (GNN), 308-310 (GEN), 311-313 (GNN), 314-316 (GEN), 317-318 (GN), and 320-322 (GEN). Positions 242-322 (GDNGNNGYNG…NGENGNNGEN (81 aa)) are 27 X 3 AA approximate tandem repeats of G-X-N. N-linked (GlcNAc...) asparagine glycosylation is present at N261. Residue 387–388 (TT) participates in substrate binding.

Belongs to the alpha-carbonic anhydrase family. As to quaternary structure, homooligomer; disulfide-linked. May also be disulfide-linked to insoluble organic matrix. Zn(2+) is required as a cofactor. N-glycosylated. As to expression, expressed at whole regions of the mantle epithelium tissue. Is found in the aragonitic nacreous and calcitic prismatic and foliated layers.

It localises to the secreted. The protein localises to the extracellular space. The protein resides in the extracellular matrix. The catalysed reaction is hydrogencarbonate + H(+) = CO2 + H2O. Its function is as follows. Acts as a negative regulator for calcification in the shells of mollusks. May function both as a calcium concentrator and as a carbonic anhydrase required for production of carbonate ions, which are assembled to CaCO(3) at mineralization sites. Is important for shell formation in both the calcitic prismatic layer and the aragonitic nacreous layer. The sequence is that of Nacrein from Pinctada fucata (Akoya pearl oyster).